The following is a 457-amino-acid chain: Putative HD domain-containing protein L394 (457 aa).

One can recognise an HD domain in the interval 65–206 (RLEHSIGVYD…GIDVDKFDYL (142 aa)).

This is Putative HD domain-containing protein L394 from Acanthamoeba polyphaga mimivirus (APMV).